A 611-amino-acid polypeptide reads, in one-letter code: Putative pentatricopeptide repeat-containing protein At1g56570 (611 aa).

PPR repeat units follow at residues 44–74 (HHILATNLIVSYFEKGLVEEARSLFDEMPDR), 75–109 (DVVAWTAMITGYASSNYNARAWECFHEMVKQGTSP), 110–144 (NEFTLSSVLKSCRNMKVLAYGALVHGVVVKLGMEG), 145–176 (SLYVDNAMMNMYATCSVTMEAACLIFRDIKVK), 177–211 (NDVTWTTLITGFTHLGDGIGGLKMYKQMLLENAEV), 212–246 (TPYCITIAVRASASIDSVTTGKQIHASVIKRGFQS), 247–281 (NLPVMNSILDLYCRCGYLSEAKHYFHEMEDKDLIT), 282–311 (WNTLISELERSDSSEALLMFQRFESQGFVP), 312–346 (NCYTFTSLVAACANIAALNCGQQLHGRIFRRGFNK), 347–377 (NVELANALIDMYAKCGNIPDSQRVFGEIVDR), 379–413 (NLVSWTSMMIGYGSHGYGAEAVELFDKMVSSGIRP), 414–444 (DRIVFMAVLSACRHAGLVEKGLKYFNVMESE), and 450–480 (DRDIYNCVVDLLGRAGKIGEAYELVERMPFK). Residues 485 to 561 (TWGAILGACK…EAGMSWILVE (77 aa)) form a type E motif region. A type E(+) motif region spans residues 562-592 (NQVFSFAVSDKMCPNASSVYSVLGLLIEETR).

The protein belongs to the PPR family. PCMP-E subfamily.

The polypeptide is Putative pentatricopeptide repeat-containing protein At1g56570 (PCMP-E64) (Arabidopsis thaliana (Mouse-ear cress)).